The primary structure comprises 157 residues: UPF0212 protein rrnAC1165 (157 aa).

A disordered region spans residues Val105–Glu157. Over residues Leu106 to Glu157 the composition is skewed to acidic residues.

Belongs to the UPF0212 family.

In Haloarcula marismortui (strain ATCC 43049 / DSM 3752 / JCM 8966 / VKM B-1809) (Halobacterium marismortui), this protein is UPF0212 protein rrnAC1165.